Consider the following 455-residue polypeptide: Fumarate hydratase class II (455 aa).

Substrate-binding positions include 96 to 98 (SGT), 122 to 125 (HPND), 132 to 134 (SSN), and Thr180. Catalysis depends on His181, which acts as the Proton donor/acceptor. The active site involves Ser311. Residues Ser312 and 317–319 (KVN) contribute to the substrate site.

The protein belongs to the class-II fumarase/aspartase family. Fumarase subfamily. In terms of assembly, homotetramer.

Its subcellular location is the cytoplasm. It catalyses the reaction (S)-malate = fumarate + H2O. The protein operates within carbohydrate metabolism; tricarboxylic acid cycle; (S)-malate from fumarate: step 1/1. Functionally, involved in the TCA cycle. Catalyzes the stereospecific interconversion of fumarate to L-malate. The polypeptide is Fumarate hydratase class II (Listeria monocytogenes serovar 1/2a (strain ATCC BAA-679 / EGD-e)).